Reading from the N-terminus, the 424-residue chain is UDP-N-acetylglucosamine 1-carboxyvinyltransferase 3 (424 aa).

Position 22–23 (22–23 (KN)) interacts with phosphoenolpyruvate. R94 is a binding site for UDP-N-acetyl-alpha-D-glucosamine. D118 (proton donor) is an active-site residue. UDP-N-acetyl-alpha-D-glucosamine contacts are provided by residues 123–127 (RPVDQ), D306, and L328.

This sequence belongs to the EPSP synthase family. MurA subfamily.

It is found in the cytoplasm. The catalysed reaction is phosphoenolpyruvate + UDP-N-acetyl-alpha-D-glucosamine = UDP-N-acetyl-3-O-(1-carboxyvinyl)-alpha-D-glucosamine + phosphate. It participates in cell wall biogenesis; peptidoglycan biosynthesis. Its function is as follows. Cell wall formation. Adds enolpyruvyl to UDP-N-acetylglucosamine. The polypeptide is UDP-N-acetylglucosamine 1-carboxyvinyltransferase 3 (Symbiobacterium thermophilum (strain DSM 24528 / JCM 14929 / IAM 14863 / T)).